Here is a 100-residue protein sequence, read N- to C-terminus: Replication restart protein PriB (100 aa).

An SSB domain is found at 1–99 (MGFNNLVSLA…LRIQNIQEYK (99 aa)).

It belongs to the PriB family. As to quaternary structure, homodimer. Interacts with PriA and DnaT. Component of the replication restart primosome. Primosome assembly occurs via a 'hand-off' mechanism. PriA binds to replication forks, subsequently PriB then DnaT bind; DnaT then displaces ssDNA to generate the helicase loading substrate.

Involved in the restart of stalled replication forks, which reloads the replicative helicase on sites other than the origin of replication; the PriA-PriB pathway is the major replication restart pathway. During primosome assembly it facilitates complex formation between PriA and DnaT on DNA; stabilizes PriA on DNA. Stimulates the DNA unwinding activity of PriA helicase. This chain is Replication restart protein PriB, found in Neisseria meningitidis serogroup B (strain ATCC BAA-335 / MC58).